Here is a 283-residue protein sequence, read N- to C-terminus: 32 kDa beta-galactoside-binding lectin (283 aa).

2 consecutive Galectin domains span residues 17–148 and 156–283; these read YRSL…VHWG and YESG…IQIQ. Residue 217–223 participates in a beta-D-galactoside binding; it reads WGNEERE.

In terms of assembly, (Microbial infection) Interacts (via domain galectin 2) with goat TMEM147. Interacts (via domain galectin 1) with goat TMEM63A.

It is found in the membrane. In terms of biological role, binds galactose. Exerts immunomodulatory effects on host peripheral blood mononuclear cells to down-regulate host immune response. Hemagglutinates human, dog, rabbit, chicken and mouse erythrocytes but does not hemagglutinate the erythrocytes of goat, its natural host. In Haemonchus contortus (Barber pole worm), this protein is 32 kDa beta-galactoside-binding lectin (GAL-1).